The chain runs to 171 residues: NADH-quinone oxidoreductase subunit B (171 aa).

[4Fe-4S] cluster is bound by residues Cys-39, Cys-40, Cys-105, and Cys-134.

The protein belongs to the complex I 20 kDa subunit family. As to quaternary structure, NDH-1 is composed of 14 different subunits. Subunits NuoB, C, D, E, F, and G constitute the peripheral sector of the complex. [4Fe-4S] cluster is required as a cofactor.

The protein resides in the cell inner membrane. It catalyses the reaction a quinone + NADH + 5 H(+)(in) = a quinol + NAD(+) + 4 H(+)(out). In terms of biological role, NDH-1 shuttles electrons from NADH, via FMN and iron-sulfur (Fe-S) centers, to quinones in the respiratory chain. The immediate electron acceptor for the enzyme in this species is believed to be ubiquinone. Couples the redox reaction to proton translocation (for every two electrons transferred, four hydrogen ions are translocated across the cytoplasmic membrane), and thus conserves the redox energy in a proton gradient. This chain is NADH-quinone oxidoreductase subunit B, found in Aliarcobacter butzleri (strain RM4018) (Arcobacter butzleri).